The primary structure comprises 410 residues: Cathepsin D (410 aa).

A signal peptide spans 1–20 (MKTPGVLLLILGLLASSSFA). A propeptide spans 21–64 (IIRIPLRKFTSIRRTMTEVGGSVEDLILKGPITKYSMQSSPKTT) (activation peptide). The Peptidase A1 domain occupies 79–405 (YYGDIGIGTP…DRDNNRVGFA (327 aa)). 2 disulfide bridges follow: cysteine 91/cysteine 160 and cysteine 110/cysteine 117. Aspartate 97 is a catalytic residue. Asparagine 134 is a glycosylation site (N-linked (GlcNAc...) asparagine). N-linked (GlcNAc...) (high mannose) asparagine glycosylation is present at asparagine 261. Cysteine 284 and cysteine 288 are oxidised to a cystine. Residue aspartate 293 is part of the active site. A disulfide bridge links cysteine 327 with cysteine 364.

The protein belongs to the peptidase A1 family. In terms of assembly, consists of a light chain and a heavy chain. Interacts with ADAM30; this leads to activation of CTSD. Interacts with GRN; stabilizes CTSD; increases its proteolytic activity. In terms of processing, N- and O-glycosylated. Undergoes proteolytic cleavage and activation by ADAM30.

The protein resides in the lysosome. It is found in the melanosome. The protein localises to the secreted. Its subcellular location is the extracellular space. The catalysed reaction is Specificity similar to, but narrower than, that of pepsin A. Does not cleave the 4-Gln-|-His-5 bond in B chain of insulin.. In terms of biological role, acid protease active in intracellular protein breakdown. Plays a role in APP processing following cleavage and activation by ADAM30 which leads to APP degradation. The polypeptide is Cathepsin D (Ctsd) (Mus musculus (Mouse)).